We begin with the raw amino-acid sequence, 723 residues long: Catalase-peroxidase (723 aa).

A cross-link (tryptophyl-tyrosyl-methioninium (Trp-Tyr) (with M-252)) is located at residues 98–226; that stretch reads WHSAGSYRVG…LAAVMMGLIY (129 aa). Histidine 99 functions as the Proton acceptor in the catalytic mechanism. Positions 226–252 form a cross-link, tryptophyl-tyrosyl-methioninium (Tyr-Met) (with W-98); the sequence is YVNPEGVDGNPDPLKTAKDMRVTFARM. Heme b is bound at residue histidine 267.

The protein belongs to the peroxidase family. Peroxidase/catalase subfamily. Homodimer or homotetramer. It depends on heme b as a cofactor. Post-translationally, formation of the three residue Trp-Tyr-Met cross-link is important for the catalase, but not the peroxidase activity of the enzyme.

The enzyme catalyses H2O2 + AH2 = A + 2 H2O. It catalyses the reaction 2 H2O2 = O2 + 2 H2O. Bifunctional enzyme with both catalase and broad-spectrum peroxidase activity. This chain is Catalase-peroxidase, found in Vibrio vulnificus (strain YJ016).